A 266-amino-acid polypeptide reads, in one-letter code: MQVIILPSAHDVALYAAARVIDVINTETNPVLGLATGSTPIALYKELVVLYQSKQVSFRHTTSFNLDEYIGIADSHEQSYRTFMNRHLFDAIDIIATNTHVPLAESQDAGTLKNSAQDYEASIQQAGGIDLQILGIGVNGHIGFNEPTSSFASRTRIKTLSESTVVANKRFFKDGEFQPHLALTMGIGTILDSRAVLLMATGKAKAEAVKAMIEGSLSAMCPASALQLHEAATIVLDEEAASLLALKEYYQWCEQKRQQLHEGDVS.

The active-site Proton acceptor; for enolization step is the aspartate 67. Asparagine 139 (for ring-opening step) is an active-site residue. The active-site Proton acceptor; for ring-opening step is histidine 141. The active-site For ring-opening step is glutamate 146.

This sequence belongs to the glucosamine/galactosamine-6-phosphate isomerase family. NagB subfamily. Homohexamer.

It catalyses the reaction alpha-D-glucosamine 6-phosphate + H2O = beta-D-fructose 6-phosphate + NH4(+). It functions in the pathway amino-sugar metabolism; N-acetylneuraminate degradation; D-fructose 6-phosphate from N-acetylneuraminate: step 5/5. Catalyzes the reversible isomerization-deamination of glucosamine 6-phosphate (GlcN6P) to form fructose 6-phosphate (Fru6P) and ammonium ion. This is Glucosamine-6-phosphate deaminase from Marinomonas sp. (strain MWYL1).